The following is a 56-amino-acid chain: Small ribosomal subunit protein uS14 (56 aa).

4 residues coordinate Zn(2+): cysteine 21, cysteine 24, cysteine 39, and cysteine 42.

This sequence belongs to the universal ribosomal protein uS14 family. Zinc-binding uS14 subfamily. As to quaternary structure, part of the 30S ribosomal subunit. It depends on Zn(2+) as a cofactor.

Functionally, binds 16S rRNA, required for the assembly of 30S particles. In Pyrococcus furiosus (strain ATCC 43587 / DSM 3638 / JCM 8422 / Vc1), this protein is Small ribosomal subunit protein uS14.